A 262-amino-acid chain; its full sequence is tRNA pseudouridine synthase A (262 aa).

The active-site Nucleophile is Asp-51. Residue Tyr-109 coordinates substrate.

Belongs to the tRNA pseudouridine synthase TruA family. As to quaternary structure, homodimer.

It catalyses the reaction uridine(38/39/40) in tRNA = pseudouridine(38/39/40) in tRNA. Its function is as follows. Formation of pseudouridine at positions 38, 39 and 40 in the anticodon stem and loop of transfer RNAs. The chain is tRNA pseudouridine synthase A from Dechloromonas aromatica (strain RCB).